A 1183-amino-acid polypeptide reads, in one-letter code: DNA-directed RNA polymerase subunit beta (1183 aa).

Residues 1151–1162 are compositionally biased toward acidic residues; sequence EIEMADVDDEDA. Residues 1151–1183 are disordered; the sequence is EIEMADVDDEDAAERKVDLQQKSAPESQKETTD.

It belongs to the RNA polymerase beta chain family. As to quaternary structure, the RNAP catalytic core consists of 2 alpha, 1 beta, 1 beta' and 1 omega subunit. When a sigma factor is associated with the core the holoenzyme is formed, which can initiate transcription.

The catalysed reaction is RNA(n) + a ribonucleoside 5'-triphosphate = RNA(n+1) + diphosphate. Its function is as follows. DNA-dependent RNA polymerase catalyzes the transcription of DNA into RNA using the four ribonucleoside triphosphates as substrates. The polypeptide is DNA-directed RNA polymerase subunit beta (Staphylococcus epidermidis (strain ATCC 12228 / FDA PCI 1200)).